Reading from the N-terminus, the 125-residue chain is Small ribosomal subunit protein bS6 (125 aa).

Residues V96 to T125 form a disordered region. Over residues E116–T125 the composition is skewed to basic and acidic residues.

The protein belongs to the bacterial ribosomal protein bS6 family.

Binds together with bS18 to 16S ribosomal RNA. This is Small ribosomal subunit protein bS6 from Nitrosospira multiformis (strain ATCC 25196 / NCIMB 11849 / C 71).